Reading from the N-terminus, the 123-residue chain is Large ribosomal subunit protein uL14 (123 aa).

It belongs to the universal ribosomal protein uL14 family. Part of the 50S ribosomal subunit. Forms a cluster with proteins L3 and L19. In the 70S ribosome, L14 and L19 interact and together make contacts with the 16S rRNA in bridges B5 and B8.

In terms of biological role, binds to 23S rRNA. Forms part of two intersubunit bridges in the 70S ribosome. The polypeptide is Large ribosomal subunit protein uL14 (Pectobacterium atrosepticum (strain SCRI 1043 / ATCC BAA-672) (Erwinia carotovora subsp. atroseptica)).